The primary structure comprises 502 residues: Actin nucleation-promoting factor WAS (502 aa).

The region spanning L39 to R148 is the WH1 domain. The segment at Q146–A240 is disordered. Polar residues predominate over residues D201–R211. S221 is subject to Phosphoserine. Positions I238–G251 constitute a CRIB domain. Y291 bears the Phosphotyrosine; by FYN and HCK mark. The segment at M307–D502 is disordered. 2 GRSGPLPPXP motif repeats span residues G337–P346 and G376–P385. A compositionally biased stretch (pro residues) spans P341 to L419. In terms of domain architecture, WH2 spans G430–T447. S483 and S484 each carry phosphoserine; by CK2. Positions E486 to D502 are enriched in acidic residues.

In terms of assembly, binds the Arp2/3 complex. Interacts with CDC42, RAC, NCK, HCK, FYN, SRC kinase FGR, BTK, ABL1, PSTPIP1, WIP, and to the p85 subunit of PLC-gamma. Interacts (via C-terminus) with ALDOA. Interacts with NCK1 (via SH3 domains). Interacts with FCHSD2. As to quaternary structure, (Microbial infection) Interacts with E.coli effector protein EspF(U). Phosphorylated at Tyr-291 by FYN and HCK, inducing WAS effector activity after TCR engagement. Phosphorylation at Tyr-291 enhances WAS activity in promoting actin polymerization and filopodia formation. In terms of tissue distribution, expressed predominantly in the thymus. Also found, to a much lesser extent, in the spleen.

It is found in the cytoplasm. It localises to the cytoskeleton. The protein resides in the nucleus. Its function is as follows. Effector protein for Rho-type GTPases that regulates actin filament reorganization via its interaction with the Arp2/3 complex. Important for efficient actin polymerization. Possible regulator of lymphocyte and platelet function. Mediates actin filament reorganization and the formation of actin pedestals upon infection by pathogenic bacteria. In addition to its role in the cytoplasmic cytoskeleton, also promotes actin polymerization in the nucleus, thereby regulating gene transcription and repair of damaged DNA. Promotes homologous recombination (HR) repair in response to DNA damage by promoting nuclear actin polymerization, leading to drive motility of double-strand breaks (DSBs). In Homo sapiens (Human), this protein is Actin nucleation-promoting factor WAS (WAS).